A 707-amino-acid chain; its full sequence is Translation initiation factor IF-2 (707 aa).

The segment covering 55-80 (LAEKPKEEKQKDQKNHEQEAQDKEEK) has biased composition (basic and acidic residues). Residues 55–88 (LAEKPKEEKQKDQKNHEQEAQDKEEKEIEEDSFY) are disordered. Residues 209–378 (PRPPIVTVMG…LLVAEMEDLK (170 aa)) form the tr-type G domain. The interval 218 to 225 (GHVDHGKT) is G1. GTP is bound at residue 218–225 (GHVDHGKT). The segment at 243-247 (GITQH) is G2. The interval 264 to 267 (DTPG) is G3. Residues 264-268 (DTPGH) and 318-321 (NKID) each bind GTP. The G4 stretch occupies residues 318 to 321 (NKID). The interval 354–356 (SAK) is G5.

It belongs to the TRAFAC class translation factor GTPase superfamily. Classic translation factor GTPase family. IF-2 subfamily.

It is found in the cytoplasm. Functionally, one of the essential components for the initiation of protein synthesis. Protects formylmethionyl-tRNA from spontaneous hydrolysis and promotes its binding to the 30S ribosomal subunits. Also involved in the hydrolysis of GTP during the formation of the 70S ribosomal complex. This chain is Translation initiation factor IF-2, found in Caldanaerobacter subterraneus subsp. tengcongensis (strain DSM 15242 / JCM 11007 / NBRC 100824 / MB4) (Thermoanaerobacter tengcongensis).